A 134-amino-acid chain; its full sequence is Thioredoxin-like protein Clot (134 aa).

The Thioredoxin domain occupies 1–134; the sequence is MTLKKVDANP…LILPLLAPST (134 aa). Catalysis depends on nucleophile residues C48 and C51. An intrachain disulfide couples C48 to C51.

The protein belongs to the thioredoxin family.

Its function is as follows. Probable thiol-disulfide oxidoreductase that may participate in various redox reactions. This chain is Thioredoxin-like protein Clot, found in Arabidopsis thaliana (Mouse-ear cress).